The chain runs to 273 residues: DNA repair protein RecO (273 aa).

The segment at 250–273 is disordered; it reads NVGQNPSGKDDLNERRDVDGTGES. The span at 257–273 shows a compositional bias: basic and acidic residues; the sequence is GKDDLNERRDVDGTGES.

This sequence belongs to the RecO family.

In terms of biological role, involved in DNA repair and RecF pathway recombination. The protein is DNA repair protein RecO of Desulfitobacterium hafniense (strain DSM 10664 / DCB-2).